We begin with the raw amino-acid sequence, 419 residues long: Gamma-glutamyl phosphate reductase (419 aa).

It belongs to the gamma-glutamyl phosphate reductase family.

It is found in the cytoplasm. It carries out the reaction L-glutamate 5-semialdehyde + phosphate + NADP(+) = L-glutamyl 5-phosphate + NADPH + H(+). It participates in amino-acid biosynthesis; L-proline biosynthesis; L-glutamate 5-semialdehyde from L-glutamate: step 2/2. Functionally, catalyzes the NADPH-dependent reduction of L-glutamate 5-phosphate into L-glutamate 5-semialdehyde and phosphate. The product spontaneously undergoes cyclization to form 1-pyrroline-5-carboxylate. This is Gamma-glutamyl phosphate reductase from Mannheimia succiniciproducens (strain KCTC 0769BP / MBEL55E).